The following is a 298-amino-acid chain: Porphobilinogen deaminase (298 aa).

The residue at position 239 (cysteine 239) is an S-(dipyrrolylmethanemethyl)cysteine.

The protein belongs to the HMBS family. Monomer. Dipyrromethane serves as cofactor.

It catalyses the reaction 4 porphobilinogen + H2O = hydroxymethylbilane + 4 NH4(+). Its pathway is porphyrin-containing compound metabolism; protoporphyrin-IX biosynthesis; coproporphyrinogen-III from 5-aminolevulinate: step 2/4. In terms of biological role, tetrapolymerization of the monopyrrole PBG into the hydroxymethylbilane pre-uroporphyrinogen in several discrete steps. The polypeptide is Porphobilinogen deaminase (Ehrlichia canis (strain Jake)).